Reading from the N-terminus, the 598-residue chain is Beta-myrcene/(E)-beta-ocimene synthase 2, chloroplastic (598 aa).

The transit peptide at 1 to 30 (MATLCIGSAPIYQNACIHNFRLQRPRRFIS) directs the protein to the chloroplast. (2E)-geranyl diphosphate contacts are provided by R307, D344, D348, R486, and N489. The Mg(2+) site is built by D344 and D348. The DDXXD motif signature appears at 344 to 348 (DDIYD). Positions 489, 493, and 497 each coordinate Mg(2+).

This sequence belongs to the terpene synthase family. Tpsb subfamily. Mg(2+) is required as a cofactor. The cofactor is Mn(2+). Expressed exclusively in mature flowers, but not in inmmature buds.

It localises to the plastid. The protein localises to the chloroplast. The enzyme catalyses (2E)-geranyl diphosphate = beta-myrcene + diphosphate. It functions in the pathway secondary metabolite biosynthesis; terpenoid biosynthesis. Its function is as follows. Involved in monoterpene (C10) biosynthesis. The major products are alpha- and beta-pinene, sabinene, beta-myrcene, (E)-beta-ocimene and limonene. The polypeptide is Beta-myrcene/(E)-beta-ocimene synthase 2, chloroplastic (TPS24) (Arabidopsis thaliana (Mouse-ear cress)).